The chain runs to 100 residues: Dromyosuppressin (100 aa).

Residues 1–24 (MSFAQFFVACCLAIVLLAVSNTRA) form the signal peptide. Residues 25 to 84 (AVQGPPLCQSGIVEEMPPHIRKVCQALENSDQLTSALKSYINNEASALVANSDDLLKNYN) constitute a propeptide that is removed on maturation. Phe-96 carries the post-translational modification Phenylalanine amide.

This sequence belongs to the myosuppressin family.

The protein localises to the secreted. In terms of biological role, myoinhibiting neuropeptide. In Drosophila melanogaster (Fruit fly), this protein is Dromyosuppressin.